The sequence spans 274 residues: Large ribosomal subunit protein uL2 (274 aa).

Residues 223–265 (VVMNPVDHPHGGGEGRTSGGRHPVSPWGMPTKGFKTRKNKRTD) are disordered. The segment covering 256–265 (FKTRKNKRTD) has biased composition (basic residues).

This sequence belongs to the universal ribosomal protein uL2 family. In terms of assembly, part of the 50S ribosomal subunit. Forms a bridge to the 30S subunit in the 70S ribosome.

Functionally, one of the primary rRNA binding proteins. Required for association of the 30S and 50S subunits to form the 70S ribosome, for tRNA binding and peptide bond formation. It has been suggested to have peptidyltransferase activity; this is somewhat controversial. Makes several contacts with the 16S rRNA in the 70S ribosome. The protein is Large ribosomal subunit protein uL2 of Vibrio parahaemolyticus serotype O3:K6 (strain RIMD 2210633).